A 352-amino-acid polypeptide reads, in one-letter code: NAD-dependent protein deacetylase sirtuin-2 (352 aa).

Serine 16 is subject to Phosphoserine. The region spanning 20–301 (RLLDELTLEG…LALAELLGWK (282 aa)) is the Deacetylase sirtuin-type domain. NAD(+) contacts are provided by residues 48-52 (AGIST) and 58-60 (DFR). Serine 63 is modified (phosphoserine). 130-133 (QNID) lines the NAD(+) pocket. Histidine 150 serves as the catalytic Proton acceptor. Positions 158 and 163 each coordinate Zn(2+). Serine 170 carries the post-translational modification Phosphoserine. 2 residues coordinate Zn(2+): cysteine 184 and cysteine 187. Residues 225–226 (TS), 249–251 (NKE), and cysteine 287 contribute to the NAD(+) site. A disordered region spans residues 314–352 (SIDAQSGAGVPNPSTSASPKKSPPPAKDEARTTEREKPQ). The segment covering 324 to 333 (PNPSTSASPK) has biased composition (low complexity). Serine 331 and serine 335 each carry phosphoserine. Positions 339 to 352 (AKDEARTTEREKPQ) are enriched in basic and acidic residues.

This sequence belongs to the sirtuin family. Class I subfamily. As to quaternary structure, interacts with CDC20, FOXO3 and FZR1. Associates with microtubules in primary cortical mature neurons. Homotrimer. Interacts (via both phosphorylated, unphosphorylated, active or inactive forms) with HDAC6; the interaction is necessary for the complex to interact with alpha-tubulin, suggesting that these proteins belong to a large complex that deacetylates the cytoskeleton. Interacts with FOXO1; the interaction is disrupted upon serum-starvation or oxidative stress, leading to increased level of acetylated FOXO1 and induction of autophagy. Interacts with RELA; the interaction occurs in the cytoplasm and is increased in a TNF-alpha-dependent manner. Interacts with HOXA10; the interaction is direct. Interacts with YWHAB and YWHAG; the interactions occur in a AKT-dependent manner and increase SIRT2-dependent TP53 deacetylation. Interacts with MAPK1/ERK2 and MAPK3/ERK1; the interactions increase SIRT2 stability and deacetylation activity. Interacts (phosphorylated form) with KMT5A isoform 2; the interaction is direct, stimulates KMT5A-mediated methyltransferase activity on histone at 'Lys-20' (H4K20me1) and is increased in a H(2)O(2)-induced oxidative stress-dependent manner. Interacts with G6PD; the interaction is enhanced by H(2)O(2) treatment. Interacts with a G1/S-specific cyclin E-CDK2 complex. Interacts with AURKA, CDK5R1 (p35 form) and CDK5 and HIF1A. Interacts with the tRNA ligase SARS1; recruited to the VEGFA promoter via interaction with SARS1. Interacts with BEX4; negatively regulates alpha-tubulin deacetylation by SIRT2. Interacts with MORN3; the interaction enhances the ubiquitination of p53/TP53. It depends on Zn(2+) as a cofactor. Post-translationally, phosphorylated at phosphoserine and phosphothreonine. Phosphorylated at Ser-331 by a mitotic kinase CDK1/cyclin B at the G2/M transition; phosphorylation regulates the delay in cell-cycle progression. Phosphorylated at Ser-331 by a mitotic kinase G1/S-specific cyclin E/Cdk2 complex; phosphorylation inactivates SIRT2-mediated alpha-tubulin deacetylation and thereby negatively regulates cell adhesion, cell migration and neurite outgrowth during neuronal differentiation. Phosphorylated by cyclin A/Cdk2 and p35-Cdk5 complexes and to a lesser extent by the cyclin D3/Cdk4 and cyclin B/Cdk1, in vitro. Dephosphorylated at Ser-331 by CDC14A and CDC14B around early anaphase. Acetylated by EP300; acetylation leads both to the decreased of SIRT2-mediated alpha-tubulin deacetylase activity and SIRT2-mediated down-regulation of TP53 transcriptional activity. In terms of processing, ubiquitinated.

It localises to the nucleus. The protein resides in the cytoplasm. The protein localises to the perinuclear region. It is found in the cytoskeleton. Its subcellular location is the microtubule organizing center. It localises to the centrosome. The protein resides in the centriole. The protein localises to the spindle. It is found in the midbody. Its subcellular location is the chromosome. It localises to the perikaryon. The protein resides in the cell projection. The protein localises to the growth cone. It is found in the myelin membrane. It catalyses the reaction N(6)-acetyl-L-lysyl-[protein] + NAD(+) + H2O = 2''-O-acetyl-ADP-D-ribose + nicotinamide + L-lysyl-[protein]. The catalysed reaction is N(6)-tetradecanoyl-L-lysyl-[protein] + NAD(+) + H2O = 2''-O-tetradecanoyl-ADP-D-ribose + nicotinamide + L-lysyl-[protein]. The enzyme catalyses N(6)-hexadecanoyl-L-lysyl-[protein] + NAD(+) + H2O = 2''-O-hexadecanoyl-ADP-D-ribose + nicotinamide + L-lysyl-[protein]. Its activity is regulated as follows. Inhibited by Sirtinol, A3 and M15 small molecules. Inhibited by nicotinamide. Inhibited by a macrocyclic peptide inhibitor S2iL5. Inhibited by EP300-induced acetylation. NAD-dependent protein deacetylase, which deacetylates internal lysines on histone and alpha-tubulin as well as many other proteins such as key transcription factors. Participates in the modulation of multiple and diverse biological processes such as cell cycle control, genomic integrity, microtubule dynamics, cell differentiation, metabolic networks, and autophagy. Plays a major role in the control of cell cycle progression and genomic stability. Functions in the antephase checkpoint preventing precocious mitotic entry in response to microtubule stress agents, and hence allowing proper inheritance of chromosomes. Positively regulates the anaphase promoting complex/cyclosome (APC/C) ubiquitin ligase complex activity by deacetylating CDC20 and FZR1, then allowing progression through mitosis. Associates both with chromatin at transcriptional start sites (TSSs) and enhancers of active genes. Plays a role in cell cycle and chromatin compaction through epigenetic modulation of the regulation of histone H4 'Lys-20' methylation (H4K20me1) during early mitosis. Specifically deacetylates histone H4 at 'Lys-16' (H4K16ac) between the G2/M transition and metaphase enabling H4K20me1 deposition by KMT5A leading to ulterior levels of H4K20me2 and H4K20me3 deposition throughout cell cycle, and mitotic S-phase progression. Deacetylates KMT5A modulating KMT5A chromatin localization during the mitotic stress response. Also deacetylates histone H3 at 'Lys-57' (H3K56ac) during the mitotic G2/M transition. During oocyte meiosis progression, may deacetylate histone H4 at 'Lys-16' (H4K16ac) and alpha-tubulin, regulating spindle assembly and chromosome alignment by influencing microtubule dynamics and kinetochore function. Deacetylates histone H4 at 'Lys-16' (H4K16ac) at the VEGFA promoter and thereby contributes to regulate expression of VEGFA, a key regulator of angiogenesis. Deacetylates alpha-tubulin at 'Lys-40' and hence controls neuronal motility, oligodendroglial cell arbor projection processes and proliferation of non-neuronal cells. Phosphorylation at Ser-368 by a G1/S-specific cyclin E-CDK2 complex inactivates SIRT2-mediated alpha-tubulin deacetylation, negatively regulating cell adhesion, cell migration and neurite outgrowth during neuronal differentiation. Deacetylates PARD3 and participates in the regulation of Schwann cell peripheral myelination formation during early postnatal development and during postinjury remyelination. Involved in several cellular metabolic pathways. Plays a role in the regulation of blood glucose homeostasis by deacetylating and stabilizing phosphoenolpyruvate carboxykinase PCK1 activity in response to low nutrient availability. Acts as a key regulator in the pentose phosphate pathway (PPP) by deacetylating and activating the glucose-6-phosphate G6PD enzyme, and therefore, stimulates the production of cytosolic NADPH to counteract oxidative damage. Maintains energy homeostasis in response to nutrient deprivation as well as energy expenditure by inhibiting adipogenesis and promoting lipolysis. Attenuates adipocyte differentiation by deacetylating and promoting FOXO1 interaction to PPARG and subsequent repression of PPARG-dependent transcriptional activity. Plays a role in the regulation of lysosome-mediated degradation of protein aggregates by autophagy in neuronal cells. Deacetylates FOXO1 in response to oxidative stress or serum deprivation, thereby negatively regulating FOXO1-mediated autophagy. Deacetylates a broad range of transcription factors and co-regulators regulating target gene expression. Deacetylates transcriptional factor FOXO3 stimulating the ubiquitin ligase SCF(SKP2)-mediated FOXO3 ubiquitination and degradation. Deacetylates HIF1A and therefore promotes HIF1A degradation and inhibition of HIF1A transcriptional activity in tumor cells in response to hypoxia. Deacetylates RELA in the cytoplasm inhibiting NF-kappaB-dependent transcription activation upon TNF-alpha stimulation. Inhibits transcriptional activation by deacetylating p53/TP53 and EP300. Also deacetylates EIF5A. Functions as a negative regulator on oxidative stress-tolerance in response to anoxia-reoxygenation conditions. Plays a role as tumor suppressor. In addition to protein deacetylase activity, also has activity toward long-chain fatty acyl groups and mediates protein-lysine demyristoylation and depalmitoylation of target proteins, such as ARF6 and KRAS, thereby regulating their association with membranes. In Pongo abelii (Sumatran orangutan), this protein is NAD-dependent protein deacetylase sirtuin-2 (SIRT2).